A 352-amino-acid polypeptide reads, in one-letter code: Photosystem II D2 protein (352 aa).

Residues 40–60 (CAYLALGGWLTGTSFVTSWYT) traverse the membrane as a helical segment. Chlorophyll a is bound at residue His117. The helical transmembrane segment at 124 to 140 (GFMLRQFEIARLVGVRP) threads the bilayer. Pheophytin a is bound by residues Gln129 and Asn142. A helical membrane pass occupies residues 152–165 (VFVSVFLMYPLGQS). His197 contacts chlorophyll a. A helical membrane pass occupies residues 207-227 (GALLCAIHGATVENTLFEDSE). A plastoquinone is bound by residues His214 and Phe261. His214 is a binding site for Fe cation. His268 serves as a coordination point for Fe cation. The helical transmembrane segment at 278–294 (GLWMSSIGIVGLALNLR) threads the bilayer.

The protein belongs to the reaction center PufL/M/PsbA/D family. PSII is composed of 1 copy each of membrane proteins PsbA, PsbB, PsbC, PsbD, PsbE, PsbF, PsbH, PsbI, PsbJ, PsbK, PsbL, PsbM, PsbT, PsbX, PsbY, PsbZ, Psb30/Ycf12, peripheral proteins PsbO, CyanoQ (PsbQ), PsbU, PsbV and a large number of cofactors. It forms dimeric complexes. It depends on The D1/D2 heterodimer binds P680, chlorophylls that are the primary electron donor of PSII, and subsequent electron acceptors. It shares a non-heme iron and each subunit binds pheophytin, quinone, additional chlorophylls, carotenoids and lipids. There is also a Cl(-1) ion associated with D1 and D2, which is required for oxygen evolution. The PSII complex binds additional chlorophylls, carotenoids and specific lipids. as a cofactor.

It localises to the cellular thylakoid membrane. It catalyses the reaction 2 a plastoquinone + 4 hnu + 2 H2O = 2 a plastoquinol + O2. Photosystem II (PSII) is a light-driven water:plastoquinone oxidoreductase that uses light energy to abstract electrons from H(2)O, generating O(2) and a proton gradient subsequently used for ATP formation. It consists of a core antenna complex that captures photons, and an electron transfer chain that converts photonic excitation into a charge separation. The D1/D2 (PsbA/PsbD) reaction center heterodimer binds P680, the primary electron donor of PSII as well as several subsequent electron acceptors. D2 is needed for assembly of a stable PSII complex. This Synechococcus elongatus (strain ATCC 33912 / PCC 7942 / FACHB-805) (Anacystis nidulans R2) protein is Photosystem II D2 protein.